We begin with the raw amino-acid sequence, 590 residues long: Aspartate--tRNA(Asp/Asn) ligase (590 aa).

Residue glutamate 176 participates in L-aspartate binding. Residues 200-203 (QLFK) form an aspartate region. Arginine 222 and histidine 451 together coordinate L-aspartate. Residue 222–224 (RDE) participates in ATP binding. Glutamate 485 lines the ATP pocket. An L-aspartate-binding site is contributed by arginine 492. 537 to 540 (GIDR) contacts ATP.

Belongs to the class-II aminoacyl-tRNA synthetase family. Type 1 subfamily. In terms of assembly, homodimer.

Its subcellular location is the cytoplasm. The enzyme catalyses tRNA(Asx) + L-aspartate + ATP = L-aspartyl-tRNA(Asx) + AMP + diphosphate. In terms of biological role, aspartyl-tRNA synthetase with relaxed tRNA specificity since it is able to aspartylate not only its cognate tRNA(Asp) but also tRNA(Asn). Reaction proceeds in two steps: L-aspartate is first activated by ATP to form Asp-AMP and then transferred to the acceptor end of tRNA(Asp/Asn). The chain is Aspartate--tRNA(Asp/Asn) ligase from Ehrlichia canis (strain Jake).